A 62-amino-acid polypeptide reads, in one-letter code: Photosystem II reaction center protein Z (62 aa).

The next 2 membrane-spanning stretches (helical) occupy residues 8 to 28 (AVFALIATSSILLIGVPVVFA) and 41 to 61 (FSGTSLWIGLVFLVGILNSLI).

This sequence belongs to the PsbZ family. PSII is composed of 1 copy each of membrane proteins PsbA, PsbB, PsbC, PsbD, PsbE, PsbF, PsbH, PsbI, PsbJ, PsbK, PsbL, PsbM, PsbT, PsbY, PsbZ, Psb30/Ycf12, at least 3 peripheral proteins of the oxygen-evolving complex and a large number of cofactors. It forms dimeric complexes.

The protein resides in the plastid. It is found in the chloroplast thylakoid membrane. May control the interaction of photosystem II (PSII) cores with the light-harvesting antenna, regulates electron flow through the 2 photosystem reaction centers. PSII is a light-driven water plastoquinone oxidoreductase, using light energy to abstract electrons from H(2)O, generating a proton gradient subsequently used for ATP formation. This chain is Photosystem II reaction center protein Z, found in Panax ginseng (Korean ginseng).